A 115-amino-acid chain; its full sequence is Phosphoribosyl-AMP cyclohydrolase (115 aa).

Asp80 is a Mg(2+) binding site. Position 81 (Cys81) interacts with Zn(2+). Mg(2+)-binding residues include Asp82 and Asp84. Residues Cys97 and Cys104 each coordinate Zn(2+).

This sequence belongs to the PRA-CH family. Homodimer. The cofactor is Mg(2+). Zn(2+) serves as cofactor.

It is found in the cytoplasm. The catalysed reaction is 1-(5-phospho-beta-D-ribosyl)-5'-AMP + H2O = 1-(5-phospho-beta-D-ribosyl)-5-[(5-phospho-beta-D-ribosylamino)methylideneamino]imidazole-4-carboxamide. It functions in the pathway amino-acid biosynthesis; L-histidine biosynthesis; L-histidine from 5-phospho-alpha-D-ribose 1-diphosphate: step 3/9. Its function is as follows. Catalyzes the hydrolysis of the adenine ring of phosphoribosyl-AMP. This is Phosphoribosyl-AMP cyclohydrolase from Mycolicibacterium smegmatis (strain ATCC 700084 / mc(2)155) (Mycobacterium smegmatis).